Consider the following 284-residue polypeptide: 4-diphosphocytidyl-2-C-methyl-D-erythritol kinase (284 aa).

Lys14 is a catalytic residue. 98–108 (PMGGGLGGGSS) lines the ATP pocket. Residue Asp140 is part of the active site.

This sequence belongs to the GHMP kinase family. IspE subfamily.

It catalyses the reaction 4-CDP-2-C-methyl-D-erythritol + ATP = 4-CDP-2-C-methyl-D-erythritol 2-phosphate + ADP + H(+). It participates in isoprenoid biosynthesis; isopentenyl diphosphate biosynthesis via DXP pathway; isopentenyl diphosphate from 1-deoxy-D-xylulose 5-phosphate: step 3/6. Catalyzes the phosphorylation of the position 2 hydroxy group of 4-diphosphocytidyl-2C-methyl-D-erythritol. In Shewanella baltica (strain OS155 / ATCC BAA-1091), this protein is 4-diphosphocytidyl-2-C-methyl-D-erythritol kinase.